Consider the following 433-residue polypeptide: 3-phosphoshikimate 1-carboxyvinyltransferase (433 aa).

The 3-phosphoshikimate site is built by K23, S24, and R28. K23 contacts phosphoenolpyruvate. The phosphoenolpyruvate site is built by G93 and R121. S167, Q169, D318, and K345 together coordinate 3-phosphoshikimate. Position 169 (Q169) interacts with phosphoenolpyruvate. The Proton acceptor role is filled by D318. Phosphoenolpyruvate is bound by residues R349 and R390.

The protein belongs to the EPSP synthase family. In terms of assembly, monomer.

Its subcellular location is the cytoplasm. It catalyses the reaction 3-phosphoshikimate + phosphoenolpyruvate = 5-O-(1-carboxyvinyl)-3-phosphoshikimate + phosphate. It functions in the pathway metabolic intermediate biosynthesis; chorismate biosynthesis; chorismate from D-erythrose 4-phosphate and phosphoenolpyruvate: step 6/7. Functionally, catalyzes the transfer of the enolpyruvyl moiety of phosphoenolpyruvate (PEP) to the 5-hydroxyl of shikimate-3-phosphate (S3P) to produce enolpyruvyl shikimate-3-phosphate and inorganic phosphate. The polypeptide is 3-phosphoshikimate 1-carboxyvinyltransferase (Nitratiruptor sp. (strain SB155-2)).